Reading from the N-terminus, the 53-residue chain is MPITLDPEKLAIVMKHRFQYKICRECGARNPPNAEKCRRCHSKNLRPKKFKKK.

Belongs to the eukaryotic ribosomal protein eL40 family.

The polypeptide is Large ribosomal subunit protein eL40 (Pyrobaculum arsenaticum (strain DSM 13514 / JCM 11321 / PZ6)).